A 595-amino-acid polypeptide reads, in one-letter code: Elongation factor 4 (595 aa).

The tr-type G domain maps to 2 to 184; the sequence is ETIRNFSIIA…TITHNIPYPK (183 aa). GTP is bound by residues 14-19 and 131-134; these read DHGKST and NKID.

Belongs to the TRAFAC class translation factor GTPase superfamily. Classic translation factor GTPase family. LepA subfamily.

Its subcellular location is the cell membrane. The enzyme catalyses GTP + H2O = GDP + phosphate + H(+). Functionally, required for accurate and efficient protein synthesis under certain stress conditions. May act as a fidelity factor of the translation reaction, by catalyzing a one-codon backward translocation of tRNAs on improperly translocated ribosomes. Back-translocation proceeds from a post-translocation (POST) complex to a pre-translocation (PRE) complex, thus giving elongation factor G a second chance to translocate the tRNAs correctly. Binds to ribosomes in a GTP-dependent manner. The chain is Elongation factor 4 from Buchnera aphidicola subsp. Baizongia pistaciae (strain Bp).